Consider the following 254-residue polypeptide: Imidazole glycerol phosphate synthase subunit HisF (254 aa).

Residues Asp-11 and Asp-130 contribute to the active site.

The protein belongs to the HisA/HisF family. In terms of assembly, heterodimer of HisH and HisF.

Its subcellular location is the cytoplasm. The catalysed reaction is 5-[(5-phospho-1-deoxy-D-ribulos-1-ylimino)methylamino]-1-(5-phospho-beta-D-ribosyl)imidazole-4-carboxamide + L-glutamine = D-erythro-1-(imidazol-4-yl)glycerol 3-phosphate + 5-amino-1-(5-phospho-beta-D-ribosyl)imidazole-4-carboxamide + L-glutamate + H(+). Its pathway is amino-acid biosynthesis; L-histidine biosynthesis; L-histidine from 5-phospho-alpha-D-ribose 1-diphosphate: step 5/9. IGPS catalyzes the conversion of PRFAR and glutamine to IGP, AICAR and glutamate. The HisF subunit catalyzes the cyclization activity that produces IGP and AICAR from PRFAR using the ammonia provided by the HisH subunit. The sequence is that of Imidazole glycerol phosphate synthase subunit HisF from Acidiphilium cryptum (strain JF-5).